A 400-amino-acid polypeptide reads, in one-letter code: MTSTSIPTFPFDRPVPTEPSPMLSELRNSCPVAPIELPSGHTAWLVTRFDDVKGVLSDKRFSCRAAAHPSSPPFVPFVQLCPSLLSIDGPQHTAARRLLAQGLNPGFIARMRPVVQQIVDNALDDLAAAEPPVDFQEIVSVPIGEQLMAKLLGVEPETVHELAAHVDAAMSVCEIGDEEVSRRWSALCTMVIDILHRKLAEPGDDLLSTIAQANRQQSTMTDEQVVGMLLTVVIGGVDTPIAVITNGLASLLHHRDQYERLVEDPGRVARAVEEIVRFNPATEIEHLRVVTEDVVIAGTALSAGSPAFTSITSANRDSDQFLDPDEFDVERNPNEHIAFGYGPHACPASAYSRMCLTTFFTSLTQRFPQLQLARPFEDLERRGKGLHSVGIKELLVTWPT.

The next 2 helical transmembrane spans lie at 225-245 (VVGM…AVIT) and 294-314 (VVIA…ITSA). Cysteine 346 lines the heme pocket.

Belongs to the cytochrome P450 family. Heme serves as cofactor.

Its subcellular location is the cell membrane. This Mycobacterium tuberculosis (strain CDC 1551 / Oshkosh) protein is Putative cytochrome P450 141 (cyp141).